A 494-amino-acid polypeptide reads, in one-letter code: Guanosine-5'-triphosphate,3'-diphosphate pyrophosphatase (494 aa).

The protein belongs to the GppA/Ppx family. GppA subfamily.

It catalyses the reaction guanosine 3'-diphosphate 5'-triphosphate + H2O = guanosine 3',5'-bis(diphosphate) + phosphate + H(+). The protein operates within purine metabolism; ppGpp biosynthesis; ppGpp from GTP: step 2/2. Catalyzes the conversion of pppGpp to ppGpp. Guanosine pentaphosphate (pppGpp) is a cytoplasmic signaling molecule which together with ppGpp controls the 'stringent response', an adaptive process that allows bacteria to respond to amino acid starvation, resulting in the coordinated regulation of numerous cellular activities. The protein is Guanosine-5'-triphosphate,3'-diphosphate pyrophosphatase of Shigella sonnei (strain Ss046).